A 421-amino-acid chain; its full sequence is Putative zinc finger protein R05D3.3 (421 aa).

C2H2-type zinc fingers lie at residues 207–228 (VLCVICNEWICSRNRKNHIEAH) and 234–257 (YKCSACSYARRREIFVDQHIRTQH). The interval 400 to 421 (GSSITDSNEPGPSEIKKELAEV) is disordered.

It localises to the nucleus. This Caenorhabditis elegans protein is Putative zinc finger protein R05D3.3.